We begin with the raw amino-acid sequence, 454 residues long: Cerebellar degeneration-related protein 2 (454 aa).

Coiled coils occupy residues 44–142 (ELED…SGQG) and 192–265 (EEEN…QSEH). The disordered stretch occupies residues 134–153 (EELKSSGQGRRSPGKCDQEK). Residue S311 is modified to Phosphoserine. Residues 346–380 (LHEVDTQYSALKVKYEELLKKCQEEQDSLSHKAVQ) adopt a coiled-coil conformation.

This sequence belongs to the CDR2 family.

In Homo sapiens (Human), this protein is Cerebellar degeneration-related protein 2 (CDR2).